We begin with the raw amino-acid sequence, 58 residues long: UPF0391 membrane protein Sden_3712 (58 aa).

The next 2 membrane-spanning stretches (helical) occupy residues 6 to 26 (LTFLVIALVAGVLGFTGIAGA) and 27 to 47 (AAGIAKIIFFVFVVLLLISLV).

It belongs to the UPF0391 family.

Its subcellular location is the cell membrane. In Shewanella denitrificans (strain OS217 / ATCC BAA-1090 / DSM 15013), this protein is UPF0391 membrane protein Sden_3712.